Reading from the N-terminus, the 413-residue chain is PAB1-binding protein 2 (413 aa).

Low complexity predominate over residues 1-23; sequence MSTETTKPSITTTPTTVLVSPNT. Residues 1–36 form a disordered region; it reads MSTETTKPSITTTPTTVLVSPNTLKRKKGEDTSEEQ. 3 KH domains span residues 66-130, 148-213, and 330-394; these read DVHL…YGMI, EISI…TFYI, and FVQQ…IMLI.

In terms of assembly, interacts with PAB1.

It is found in the nucleus. In Saccharomyces cerevisiae (strain ATCC 204508 / S288c) (Baker's yeast), this protein is PAB1-binding protein 2 (PBP2).